Consider the following 313-residue polypeptide: N-acetyl-gamma-glutamyl-phosphate reductase 2 (313 aa).

Residue cysteine 117 is part of the active site.

This sequence belongs to the NAGSA dehydrogenase family. Type 2 subfamily.

The protein localises to the cytoplasm. The enzyme catalyses N-acetyl-L-glutamate 5-semialdehyde + phosphate + NADP(+) = N-acetyl-L-glutamyl 5-phosphate + NADPH + H(+). It participates in amino-acid biosynthesis; L-arginine biosynthesis; N(2)-acetyl-L-ornithine from L-glutamate: step 3/4. In terms of biological role, catalyzes the NADPH-dependent reduction of N-acetyl-5-glutamyl phosphate to yield N-acetyl-L-glutamate 5-semialdehyde. The protein is N-acetyl-gamma-glutamyl-phosphate reductase 2 of Pseudomonas putida (strain ATCC 47054 / DSM 6125 / CFBP 8728 / NCIMB 11950 / KT2440).